A 401-amino-acid polypeptide reads, in one-letter code: 4-hydroxy-3-methylbut-2-enyl diphosphate reductase (401 aa).

Cys66 contacts [4Fe-4S] cluster. (2E)-4-hydroxy-3-methylbut-2-enyl diphosphate is bound at residue His96. Position 96 (His96) interacts with dimethylallyl diphosphate. His96 contacts isopentenyl diphosphate. Cys157 serves as a coordination point for [4Fe-4S] cluster. (2E)-4-hydroxy-3-methylbut-2-enyl diphosphate is bound at residue His185. His185 provides a ligand contact to dimethylallyl diphosphate. His185 lines the isopentenyl diphosphate pocket. Glu187 acts as the Proton donor in catalysis. Thr250 contacts (2E)-4-hydroxy-3-methylbut-2-enyl diphosphate. A [4Fe-4S] cluster-binding site is contributed by Cys288. 4 residues coordinate (2E)-4-hydroxy-3-methylbut-2-enyl diphosphate: Ser317, Ser318, Asn319, and Ser379. Ser317, Ser318, Asn319, and Ser379 together coordinate dimethylallyl diphosphate. The isopentenyl diphosphate site is built by Ser317, Ser318, Asn319, and Ser379.

Belongs to the IspH family. The cofactor is [4Fe-4S] cluster.

It carries out the reaction isopentenyl diphosphate + 2 oxidized [2Fe-2S]-[ferredoxin] + H2O = (2E)-4-hydroxy-3-methylbut-2-enyl diphosphate + 2 reduced [2Fe-2S]-[ferredoxin] + 2 H(+). The catalysed reaction is dimethylallyl diphosphate + 2 oxidized [2Fe-2S]-[ferredoxin] + H2O = (2E)-4-hydroxy-3-methylbut-2-enyl diphosphate + 2 reduced [2Fe-2S]-[ferredoxin] + 2 H(+). It functions in the pathway isoprenoid biosynthesis; dimethylallyl diphosphate biosynthesis; dimethylallyl diphosphate from (2E)-4-hydroxy-3-methylbutenyl diphosphate: step 1/1. It participates in isoprenoid biosynthesis; isopentenyl diphosphate biosynthesis via DXP pathway; isopentenyl diphosphate from 1-deoxy-D-xylulose 5-phosphate: step 6/6. Its function is as follows. Catalyzes the conversion of 1-hydroxy-2-methyl-2-(E)-butenyl 4-diphosphate (HMBPP) into a mixture of isopentenyl diphosphate (IPP) and dimethylallyl diphosphate (DMAPP). Acts in the terminal step of the DOXP/MEP pathway for isoprenoid precursor biosynthesis. The polypeptide is 4-hydroxy-3-methylbut-2-enyl diphosphate reductase (Trichodesmium erythraeum (strain IMS101)).